Consider the following 326-residue polypeptide: tRNA uridine(34) hydroxylase (326 aa).

The Rhodanese domain occupies 123 to 217 (SDPEVLLIDT…YLEEVKPEES (95 aa)). The active-site Cysteine persulfide intermediate is the Cys177. A disordered region spans residues 293 to 326 (KSRGESHIGSDVKQVIEARRQDKVERKQRQHQEG).

This sequence belongs to the TrhO family.

The catalysed reaction is uridine(34) in tRNA + AH2 + O2 = 5-hydroxyuridine(34) in tRNA + A + H2O. Functionally, catalyzes oxygen-dependent 5-hydroxyuridine (ho5U) modification at position 34 in tRNAs. The chain is tRNA uridine(34) hydroxylase from Shewanella loihica (strain ATCC BAA-1088 / PV-4).